We begin with the raw amino-acid sequence, 545 residues long: CTP synthase (545 aa).

The amidoligase domain stretch occupies residues 1-266 (MTTNYIFVTG…DDYICKRFSL (266 aa)). Ser14 is a binding site for CTP. Residue Ser14 coordinates UTP. ATP is bound by residues 15 to 20 (SLGKGI) and Asp72. Positions 72 and 140 each coordinate Mg(2+). Residues 147 to 149 (DIE), 187 to 192 (KTKPTQ), and Lys223 contribute to the CTP site. Residues 187–192 (KTKPTQ) and Lys223 each bind UTP. An ATP-binding site is contributed by 239 to 241 (KDV). One can recognise a Glutamine amidotransferase type-1 domain in the interval 291-542 (TIGMVGKYIE…VKAANEHQKR (252 aa)). L-glutamine is bound at residue Gly352. Cys379 acts as the Nucleophile; for glutamine hydrolysis in catalysis. Residues 380–383 (LGMQ), Glu403, and Arg470 each bind L-glutamine. Catalysis depends on residues His515 and Glu517.

Belongs to the CTP synthase family. In terms of assembly, homotetramer.

It catalyses the reaction UTP + L-glutamine + ATP + H2O = CTP + L-glutamate + ADP + phosphate + 2 H(+). The enzyme catalyses L-glutamine + H2O = L-glutamate + NH4(+). The catalysed reaction is UTP + NH4(+) + ATP = CTP + ADP + phosphate + 2 H(+). Its pathway is pyrimidine metabolism; CTP biosynthesis via de novo pathway; CTP from UDP: step 2/2. Allosterically activated by GTP, when glutamine is the substrate; GTP has no effect on the reaction when ammonia is the substrate. The allosteric effector GTP functions by stabilizing the protein conformation that binds the tetrahedral intermediate(s) formed during glutamine hydrolysis. Inhibited by the product CTP, via allosteric rather than competitive inhibition. In terms of biological role, catalyzes the ATP-dependent amination of UTP to CTP with either L-glutamine or ammonia as the source of nitrogen. Regulates intracellular CTP levels through interactions with the four ribonucleotide triphosphates. The chain is CTP synthase from Salmonella newport (strain SL254).